A 311-amino-acid chain; its full sequence is tRNA dimethylallyltransferase (311 aa).

13 to 20 (GPTASGKT) is an ATP binding site. 15–20 (TASGKT) is a binding site for substrate. Interaction with substrate tRNA regions lie at residues 38-41 (DSMQ) and 166-170 (QRVLR).

The protein belongs to the IPP transferase family. As to quaternary structure, monomer. Requires Mg(2+) as cofactor.

It catalyses the reaction adenosine(37) in tRNA + dimethylallyl diphosphate = N(6)-dimethylallyladenosine(37) in tRNA + diphosphate. Functionally, catalyzes the transfer of a dimethylallyl group onto the adenine at position 37 in tRNAs that read codons beginning with uridine, leading to the formation of N6-(dimethylallyl)adenosine (i(6)A). In Staphylococcus aureus (strain MRSA252), this protein is tRNA dimethylallyltransferase.